The following is a 116-amino-acid chain: DNA-directed RNA polymerase subunit omega (116 aa).

This sequence belongs to the RNA polymerase subunit omega family. As to quaternary structure, the RNAP catalytic core consists of 2 alpha, 1 beta, 1 beta' and 1 omega subunit. When a sigma factor is associated with the core the holoenzyme is formed, which can initiate transcription.

It carries out the reaction RNA(n) + a ribonucleoside 5'-triphosphate = RNA(n+1) + diphosphate. Its function is as follows. Promotes RNA polymerase assembly. Latches the N- and C-terminal regions of the beta' subunit thereby facilitating its interaction with the beta and alpha subunits. The protein is DNA-directed RNA polymerase subunit omega of Hyphomonas neptunium (strain ATCC 15444).